The primary structure comprises 226 residues: Enolase-phosphatase E1 (226 aa).

It belongs to the HAD-like hydrolase superfamily. MasA/MtnC family. In terms of assembly, monomer. It depends on Mg(2+) as a cofactor.

The enzyme catalyses 5-methylsulfanyl-2,3-dioxopentyl phosphate + H2O = 1,2-dihydroxy-5-(methylsulfanyl)pent-1-en-3-one + phosphate. It functions in the pathway amino-acid biosynthesis; L-methionine biosynthesis via salvage pathway; L-methionine from S-methyl-5-thio-alpha-D-ribose 1-phosphate: step 3/6. The protein operates within amino-acid biosynthesis; L-methionine biosynthesis via salvage pathway; L-methionine from S-methyl-5-thio-alpha-D-ribose 1-phosphate: step 4/6. In terms of biological role, bifunctional enzyme that catalyzes the enolization of 2,3-diketo-5-methylthiopentyl-1-phosphate (DK-MTP-1-P) into the intermediate 2-hydroxy-3-keto-5-methylthiopentenyl-1-phosphate (HK-MTPenyl-1-P), which is then dephosphorylated to form the acireductone 1,2-dihydroxy-3-keto-5-methylthiopentene (DHK-MTPene). This Shewanella putrefaciens (strain CN-32 / ATCC BAA-453) protein is Enolase-phosphatase E1.